Here is a 73-residue protein sequence, read N- to C-terminus: DNA-directed RNA polymerase subunit Rpo10 (73 aa).

The Zn(2+) site is built by Cys7, Cys10, Cys44, and Cys45.

The protein belongs to the archaeal Rpo10/eukaryotic RPB10 RNA polymerase subunit family. In terms of assembly, part of the RNA polymerase complex. Forms an Rpo3-Rpo10-Rpo11-Rpo12 complex upon coexpression. The cofactor is Zn(2+).

It is found in the cytoplasm. It catalyses the reaction RNA(n) + a ribonucleoside 5'-triphosphate = RNA(n+1) + diphosphate. Its function is as follows. DNA-dependent RNA polymerase (RNAP) catalyzes the transcription of DNA into RNA using the four ribonucleoside triphosphates as substrates. The polypeptide is DNA-directed RNA polymerase subunit Rpo10 (Methanocaldococcus jannaschii (strain ATCC 43067 / DSM 2661 / JAL-1 / JCM 10045 / NBRC 100440) (Methanococcus jannaschii)).